Reading from the N-terminus, the 219-residue chain is Glycerol-3-phosphate acyltransferase 2 (219 aa).

A run of 5 helical transmembrane segments spans residues methionine 1 to proline 21, tryptophan 55 to alanine 75, alanine 93 to leucine 113, valine 135 to leucine 155, and isoleucine 160 to glutamate 180.

The protein belongs to the PlsY family. In terms of assembly, probably interacts with PlsX.

The protein resides in the cell inner membrane. The enzyme catalyses an acyl phosphate + sn-glycerol 3-phosphate = a 1-acyl-sn-glycero-3-phosphate + phosphate. The protein operates within lipid metabolism; phospholipid metabolism. In terms of biological role, catalyzes the transfer of an acyl group from acyl-phosphate (acyl-PO(4)) to glycerol-3-phosphate (G3P) to form lysophosphatidic acid (LPA). This enzyme utilizes acyl-phosphate as fatty acyl donor, but not acyl-CoA or acyl-ACP. The polypeptide is Glycerol-3-phosphate acyltransferase 2 (Rhizobium johnstonii (strain DSM 114642 / LMG 32736 / 3841) (Rhizobium leguminosarum bv. viciae)).